The sequence spans 550 residues: Probable acyl-activating enzyme 9 (550 aa).

Belongs to the ATP-dependent AMP-binding enzyme family. In terms of tissue distribution, expressed in leaves, flowers and developing seeds.

In terms of biological role, may act as an acid--thiol ligase that activates carboxylic acids by forming acyl-CoAs. The protein is Probable acyl-activating enzyme 9 (AEE9) of Arabidopsis thaliana (Mouse-ear cress).